The chain runs to 541 residues: Solute carrier family 2, facilitated glucose transporter member 10 (541 aa).

The Cytoplasmic segment spans residues 1-15 (MGHSPPVLPLCASVS). Residues 16–36 (LLGGLTFGYELAVISGALLPL) form a helical membrane-spanning segment. At 37 to 48 (QLDFGLSCLEQE) the chain is on the extracellular side. The helical transmembrane segment at 49 to 69 (FLVGSLLLGALLASLVGGFLI) threads the bilayer. The Cytoplasmic portion of the chain corresponds to 70–77 (DCYGRKQA). A helical membrane pass occupies residues 78-98 (ILGSNLVLLAGSLTLGLAGSL). The Extracellular portion of the chain corresponds to 99–106 (AWLVLGRA). The helical transmembrane segment at 107 to 127 (VVGFAISLSSMACCIYVSELV) threads the bilayer. Topologically, residues 128–134 (GPRQRGV) are cytoplasmic. Residues 135–155 (LVSLYEAGITVGILLSYALNY) traverse the membrane as a helical segment. The Extracellular portion of the chain corresponds to 156 to 166 (ALAGTPWGWRH). The chain crosses the membrane as a helical span at residues 167–187 (MFGWATAPAVLQSLSLLFLPA). At 188–233 (GTDETATHKDLIPLQGGEAPKLGPGRPRYSFLDLFRARDNMRGRTT) the chain is on the cytoplasmic side. Residues 234–254 (VGLGLVLFQQLTGQPNVLCYA) form a helical membrane-spanning segment. 242–243 (QQ) serves as a coordination point for D-glucose. Over 255–269 (STIFSSVGFHGGSSA) the chain is Extracellular. The chain crosses the membrane as a helical span at residues 270 to 290 (VLASVGLGAVKVAATLTAMGL). The Cytoplasmic segment spans residues 291-298 (VDRAGRRA). A helical transmembrane segment spans residues 299–319 (LLLAGCALMALSVSGIGLVSF). Over 320-414 (AVPMDSGPSC…HALLRWTALL (95 aa)) the chain is Extracellular. Asn-334 carries an N-linked (GlcNAc...) asparagine glycan. A disordered region spans residues 340–388 (GLPGDSGLLQDSSLPPIPRTNEDQREPILSTAKKTKPHPRSGDPSAPPR). Residues 415–435 (CLMVFVSAFSFGFGPVTWLVL) form a helical membrane-spanning segment. Trp-432 is a binding site for D-glucose. The Cytoplasmic portion of the chain corresponds to 436-445 (SEIYPVEIRG). A helical membrane pass occupies residues 446 to 466 (RAFAFCNSFNWAANLFISLSF). The Extracellular portion of the chain corresponds to 467–476 (LDLIGTIGLS). The helical transmembrane segment at 477–497 (WTFLLYGLTAVLGLGFIYLFV) threads the bilayer. Topologically, residues 498–541 (PETKGQSLAEIDQQFQKRRFTLSFGHRQNSTGIPYSRIEISAAS) are cytoplasmic.

The protein belongs to the major facilitator superfamily. Sugar transporter (TC 2.A.1.1) family. Glucose transporter subfamily. As to expression, widely expressed; highest levels in liver and pancreas.

Its subcellular location is the endomembrane system. It localises to the cytoplasm. It is found in the perinuclear region. The enzyme catalyses D-glucose(out) = D-glucose(in). Its function is as follows. Facilitative glucose transporter required for the development of the cardiovascular system. The chain is Solute carrier family 2, facilitated glucose transporter member 10 from Homo sapiens (Human).